The primary structure comprises 340 residues: Ferrochelatase (340 aa).

Fe cation contacts are provided by His189 and Glu292.

This sequence belongs to the ferrochelatase family.

It localises to the cytoplasm. It carries out the reaction heme b + 2 H(+) = protoporphyrin IX + Fe(2+). Its pathway is porphyrin-containing compound metabolism; protoheme biosynthesis; protoheme from protoporphyrin-IX: step 1/1. Catalyzes the ferrous insertion into protoporphyrin IX. This chain is Ferrochelatase, found in Pseudomonas aeruginosa (strain UCBPP-PA14).